The chain runs to 1006 residues: Unconventional myosin-Id (1006 aa).

Ala-2 bears the N-acetylalanine mark. The 687-residue stretch at 9–695 (FGKADFVLMD…TLFTLEELRA (687 aa)) folds into the Myosin motor domain. 102 to 109 (GESGAGKT) serves as a coordination point for ATP. Residue Ser-200 is modified to Phosphoserine. Tyr-536 is modified (phosphotyrosine). Residues 572–594 (MIALVDNLASKEPYYVRCIKPND) are actin-binding. IQ domains lie at 699-719 (VRVV…MRYK) and 721-741 (TKAA…SYIH). Residues 812-1005 (GQRADLGLQR…RSGFILSVPG (194 aa)) enclose the TH1 domain.

This sequence belongs to the TRAFAC class myosin-kinesin ATPase superfamily. Myosin family. Interacts (via the two IQ motifs) with calmodulin. Binds an additional calmodulin chain via a third, C-terminal region. Interacts with F-actin. Detected in enterocytes at the intestinal brush border membrane. Detected at the tip of intestinal microvilli (at protein level).

It localises to the cytoplasm. It is found in the perikaryon. Its subcellular location is the cell projection. The protein localises to the dendrite. The protein resides in the early endosome. It localises to the cell cortex. It is found in the basolateral cell membrane. Functionally, unconventional myosin that functions as actin-based motor protein with ATPase activity. Plays a role in endosomal protein trafficking, and especially in the transfer of cargo proteins from early to recycling endosomes. Required for normal planar cell polarity in ciliated tracheal cells, for normal rotational polarity of cilia, and for coordinated, unidirectional ciliary movement in the trachea. Required for normal, polarized cilia organization in brain ependymal epithelial cells. This Mus musculus (Mouse) protein is Unconventional myosin-Id.